Here is a 341-residue protein sequence, read N- to C-terminus: HTH-type transcriptional repressor PurR (341 aa).

The region spanning 2–56 (ATIKDVAKRAGVSTTTVSHVINKTRFVADETKAAVWEAIKELHYSPSAVARSLKV) is the HTH lacI-type domain. Positions 4–23 (IKDVAKRAGVSTTTVSHVIN) form a DNA-binding region, H-T-H motif. A DNA-binding region spans residues 48–56 (SAVARSLKV). Hypoxanthine is bound by residues Y73, R190, T192, F221, and D275.

Homodimer.

It participates in purine metabolism; purine nucleotide biosynthesis [regulation]. In terms of biological role, is the main repressor of the genes involved in the de novo synthesis of purine nucleotides, regulating purB, purC, purEK, purF, purHD, purL, purMN and guaBA expression. PurR is allosterically activated to bind its cognate DNA by binding the purine corepressors, hypoxanthine or guanine, thereby effecting transcription repression. This Edwardsiella ictaluri (strain 93-146) protein is HTH-type transcriptional repressor PurR.